The following is a 251-amino-acid chain: 2,3-bisphosphoglycerate-dependent phosphoglycerate mutase (251 aa).

Substrate contacts are provided by residues 8–15 (RHGESLWN), 21–22 (TG), Arg60, 87–90 (ERHY), Lys98, 114–115 (RR), and 183–184 (GN). His9 acts as the Tele-phosphohistidine intermediate in catalysis. The active-site Proton donor/acceptor is the Glu87.

The protein belongs to the phosphoglycerate mutase family. BPG-dependent PGAM subfamily.

The enzyme catalyses (2R)-2-phosphoglycerate = (2R)-3-phosphoglycerate. Its pathway is carbohydrate degradation; glycolysis; pyruvate from D-glyceraldehyde 3-phosphate: step 3/5. In terms of biological role, catalyzes the interconversion of 2-phosphoglycerate and 3-phosphoglycerate. This Thermoanaerobacter sp. (strain X514) protein is 2,3-bisphosphoglycerate-dependent phosphoglycerate mutase.